The primary structure comprises 639 residues: Chaperone protein DnaK (639 aa).

The residue at position 198 (T198) is a Phosphothreonine; by autocatalysis. The disordered stretch occupies residues 602–639 (QAKSQAQGGDNADAGKQANATADDVVDAEFEEVKDDKK). A compositionally biased stretch (acidic residues) spans 625-639 (DVVDAEFEEVKDDKK).

It belongs to the heat shock protein 70 family.

In terms of biological role, acts as a chaperone. This Shewanella baltica (strain OS155 / ATCC BAA-1091) protein is Chaperone protein DnaK.